We begin with the raw amino-acid sequence, 470 residues long: Uronate isomerase (470 aa).

This sequence belongs to the metallo-dependent hydrolases superfamily. Uronate isomerase family.

It catalyses the reaction D-glucuronate = D-fructuronate. The enzyme catalyses aldehydo-D-galacturonate = keto-D-tagaturonate. It functions in the pathway carbohydrate metabolism; pentose and glucuronate interconversion. The chain is Uronate isomerase from Escherichia fergusonii (strain ATCC 35469 / DSM 13698 / CCUG 18766 / IAM 14443 / JCM 21226 / LMG 7866 / NBRC 102419 / NCTC 12128 / CDC 0568-73).